The chain runs to 55 residues: Caltrin-like protein 2 (55 aa).

A WAP domain is found at 7 to 55; it reads AINRPGSCPRVMIYCPARHPPNKCTSDYDCPKPQKCCPGYCGKQCYQPE.

In terms of processing, glycosylated.

Its function is as follows. Inhibits calcium transport into spermatozoa. The protein is Caltrin-like protein 2 of Cavia porcellus (Guinea pig).